An 858-amino-acid polypeptide reads, in one-letter code: RNA-directed RNA polymerase 2a (858 aa).

In terms of domain architecture, RdRp catalytic spans K511–P624. Residues T772–V830 form a disordered region. Basic and acidic residues predominate over residues D779–R790. Residues K805–Q817 show a composition bias toward polar residues.

Belongs to the ssRNA positive-strand viruses RNA-directed RNA polymerase family. In terms of assembly, interacts with replication protein 1a.

It carries out the reaction RNA(n) + a ribonucleoside 5'-triphosphate = RNA(n+1) + diphosphate. In terms of biological role, RNA-dependent RNA polymerase which replicates the viral genome composed of 3 RNA segments, RNA1, RNA2 and RNA3. The chain is RNA-directed RNA polymerase 2a from Cucumis sativus (Cucumber).